A 399-amino-acid polypeptide reads, in one-letter code: Succinate--CoA ligase [ADP-forming] subunit beta (399 aa).

In terms of domain architecture, ATP-grasp spans 9–254 (KAVLQPFGVS…TTEEDAKEIE (246 aa)). Residues K46, 53–55 (GRG), E109, S112, and E117 contribute to the ATP site. Mg(2+) contacts are provided by N209 and D223. Residues N274 and 331 to 333 (GIM) each bind substrate.

It belongs to the succinate/malate CoA ligase beta subunit family. In terms of assembly, heterotetramer of two alpha and two beta subunits. Mg(2+) serves as cofactor.

The enzyme catalyses succinate + ATP + CoA = succinyl-CoA + ADP + phosphate. It carries out the reaction GTP + succinate + CoA = succinyl-CoA + GDP + phosphate. It participates in carbohydrate metabolism; tricarboxylic acid cycle; succinate from succinyl-CoA (ligase route): step 1/1. Functionally, succinyl-CoA synthetase functions in the citric acid cycle (TCA), coupling the hydrolysis of succinyl-CoA to the synthesis of either ATP or GTP and thus represents the only step of substrate-level phosphorylation in the TCA. The beta subunit provides nucleotide specificity of the enzyme and binds the substrate succinate, while the binding sites for coenzyme A and phosphate are found in the alpha subunit. This is Succinate--CoA ligase [ADP-forming] subunit beta from Rhodopseudomonas palustris (strain BisA53).